Reading from the N-terminus, the 126-residue chain is Methylglyoxal synthase (126 aa).

Residues 1–126 (MEKKIALIAH…LIKGFEGLNT (126 aa)) enclose the MGS-like domain. Substrate is bound by residues His10, Lys14, 36-39 (TGTT), and 56-57 (SG). The active-site Proton donor/acceptor is the Asp62. Substrate is bound at residue His89.

It belongs to the methylglyoxal synthase family.

It catalyses the reaction dihydroxyacetone phosphate = methylglyoxal + phosphate. In terms of biological role, catalyzes the formation of methylglyoxal from dihydroxyacetone phosphate. This is Methylglyoxal synthase from Borrelia garinii subsp. bavariensis (strain ATCC BAA-2496 / DSM 23469 / PBi) (Borreliella bavariensis).